The primary structure comprises 303 residues: MRNSLTIGTRASKLALVQTHMIRDALQAAHPGLTVAVERITTRGDIILDRPLNAIGDKGLFVVEIEEAMRAGRVDLAVHSAKDLPSTLPPDMTLAVCPRRADPRDALVAQPGMTLASLPHGARVGTSSLRRACQLRALRPDLTLLDLRGNVDTRLRKLREGQYDAIVLAAAGLKRLGLEEVITELLEPDVLIPAVGQGIIGVEARAGDDEVLRLLAPLDDPAARAAITAERAFLARIGGGCRVPVGALALLEGDELLLYGMIGALDGRMVRGMRSGSASDPAGLGSALAEELLDAGGQALLAG.

The residue at position 241 (Cys-241) is an S-(dipyrrolylmethanemethyl)cysteine.

The protein belongs to the HMBS family. In terms of assembly, monomer. Dipyrromethane is required as a cofactor.

It carries out the reaction 4 porphobilinogen + H2O = hydroxymethylbilane + 4 NH4(+). The protein operates within porphyrin-containing compound metabolism; protoporphyrin-IX biosynthesis; coproporphyrinogen-III from 5-aminolevulinate: step 2/4. Its pathway is porphyrin-containing compound metabolism; chlorophyll biosynthesis. Functionally, tetrapolymerization of the monopyrrole PBG into the hydroxymethylbilane pre-uroporphyrinogen in several discrete steps. The sequence is that of Porphobilinogen deaminase from Roseiflexus castenholzii (strain DSM 13941 / HLO8).